Here is a 299-residue protein sequence, read N- to C-terminus: Recombination-associated protein RdgC (299 aa).

This sequence belongs to the RdgC family.

It is found in the cytoplasm. The protein resides in the nucleoid. Its function is as follows. May be involved in recombination. The polypeptide is Recombination-associated protein RdgC (Bordetella bronchiseptica (strain ATCC BAA-588 / NCTC 13252 / RB50) (Alcaligenes bronchisepticus)).